Consider the following 215-residue polypeptide: Cytochrome b6 (215 aa).

Residues 32–52 (IFYCLGGITLTCFLVQVATGF) traverse the membrane as a helical segment. Heme c is bound at residue Cys-35. His-86 and His-100 together coordinate heme b. Transmembrane regions (helical) follow at residues 90-110 (ASMM…TGGF), 116-136 (LTWV…VTGY), and 186-206 (LHTF…FPMI). Residues His-187 and His-202 each contribute to the heme b site.

Belongs to the cytochrome b family. PetB subfamily. In terms of assembly, the 4 large subunits of the cytochrome b6-f complex are cytochrome b6, subunit IV (17 kDa polypeptide, PetD), cytochrome f and the Rieske protein, while the 4 small subunits are PetG, PetL, PetM and PetN. The complex functions as a dimer. The cofactor is heme b. Requires heme c as cofactor.

It is found in the plastid. It localises to the chloroplast thylakoid membrane. Its function is as follows. Component of the cytochrome b6-f complex, which mediates electron transfer between photosystem II (PSII) and photosystem I (PSI), cyclic electron flow around PSI, and state transitions. This chain is Cytochrome b6, found in Liriodendron tulipifera (Tuliptree).